Reading from the N-terminus, the 101-residue chain is Large ribosomal subunit protein bL21 (101 aa).

It belongs to the bacterial ribosomal protein bL21 family. Part of the 50S ribosomal subunit. Contacts protein L20.

In terms of biological role, this protein binds to 23S rRNA in the presence of protein L20. The sequence is that of Large ribosomal subunit protein bL21 from Thermus thermophilus (strain ATCC BAA-163 / DSM 7039 / HB27).